Here is a 342-residue protein sequence, read N- to C-terminus: Heat-inducible transcription repressor HrcA (342 aa).

Belongs to the HrcA family.

Functionally, negative regulator of class I heat shock genes (grpE-dnaK-dnaJ and groELS operons). Prevents heat-shock induction of these operons. The sequence is that of Heat-inducible transcription repressor HrcA from Acholeplasma laidlawii.